The sequence spans 308 residues: Ribosomal RNA small subunit methyltransferase H (308 aa).

S-adenosyl-L-methionine contacts are provided by residues 38–40 (GGH), aspartate 58, phenylalanine 82, aspartate 99, and glutamine 106.

The protein belongs to the methyltransferase superfamily. RsmH family.

The protein localises to the cytoplasm. The catalysed reaction is cytidine(1402) in 16S rRNA + S-adenosyl-L-methionine = N(4)-methylcytidine(1402) in 16S rRNA + S-adenosyl-L-homocysteine + H(+). In terms of biological role, specifically methylates the N4 position of cytidine in position 1402 (C1402) of 16S rRNA. The sequence is that of Ribosomal RNA small subunit methyltransferase H from Acidovorax ebreus (strain TPSY) (Diaphorobacter sp. (strain TPSY)).